Reading from the N-terminus, the 391-residue chain is Thioredoxin-interacting protein (391 aa).

Lys212 participates in a covalent cross-link: Glycyl lysine isopeptide (Lys-Gly) (interchain with G-Cter in ubiquitin). Position 361 is a phosphoserine (Ser361).

Belongs to the arrestin family. In terms of assembly, homodimer; disulfide-linked. Interacts with TXN/thioredoxin through its redox-active site. Interacts with transcriptional repressors ZBTB16, ZBTB32 and HDAC1. Interacts with DDIT4. Post-translationally, ubiquitinated; undergoes heterotypic 'Lys-48'-/'Lys-63'-branched polyubiquitination catalyzed by ITCH and UBR5 resulting in proteasomal degradation. Deubiquitinated by USP5, leading to TXNIP stabilization.

The protein localises to the cytoplasm. May act as an oxidative stress mediator by inhibiting thioredoxin activity or by limiting its bioavailability. Interacts with COPS5 and restores COPS5-induced suppression of CDKN1B stability, blocking the COPS5-mediated translocation of CDKN1B from the nucleus to the cytoplasm. Functions as a transcriptional repressor, possibly by acting as a bridge molecule between transcription factors and corepressor complexes, and over-expression will induce G0/G1 cell cycle arrest. Required for the maturation of natural killer cells. Acts as a suppressor of tumor cell growth. Inhibits the proteasomal degradation of DDIT4, and thereby contributes to the inhibition of the mammalian target of rapamycin complex 1 (mTORC1). This is Thioredoxin-interacting protein (TXNIP) from Pongo abelii (Sumatran orangutan).